A 211-amino-acid chain; its full sequence is Protein-methionine-sulfoxide reductase heme-binding subunit MsrQ (211 aa).

Transmembrane regions (helical) follow at residues 17–37, 82–102, 116–136, 153–173, and 178–198; these read LAGLLPFLWLVWAINHGGLGA, LWCFAWATLHLTSYALLELGV, PYLTLGIISWVILLALAFTST, FVYLVAILAPIHYLWSVKIIS, and IYAGLAVLLLALRYKKLLSLF.

Belongs to the MsrQ family. In terms of assembly, heterodimer of a catalytic subunit (MsrP) and a heme-binding subunit (MsrQ). FMN serves as cofactor. The cofactor is heme b.

It is found in the cell inner membrane. Its function is as follows. Part of the MsrPQ system that repairs oxidized periplasmic proteins containing methionine sulfoxide residues (Met-O), using respiratory chain electrons. Thus protects these proteins from oxidative-stress damage caused by reactive species of oxygen and chlorine generated by the host defense mechanisms. MsrPQ is essential for the maintenance of envelope integrity under bleach stress, rescuing a wide series of structurally unrelated periplasmic proteins from methionine oxidation, including the primary periplasmic chaperone SurA and the lipoprotein Pal. MsrQ provides electrons for reduction to the reductase catalytic subunit MsrP, using the quinone pool of the respiratory chain. This is Protein-methionine-sulfoxide reductase heme-binding subunit MsrQ from Shigella boydii serotype 4 (strain Sb227).